We begin with the raw amino-acid sequence, 151 residues long: SsrA-binding protein (151 aa).

Belongs to the SmpB family.

It is found in the cytoplasm. Required for rescue of stalled ribosomes mediated by trans-translation. Binds to transfer-messenger RNA (tmRNA), required for stable association of tmRNA with ribosomes. tmRNA and SmpB together mimic tRNA shape, replacing the anticodon stem-loop with SmpB. tmRNA is encoded by the ssrA gene; the 2 termini fold to resemble tRNA(Ala) and it encodes a 'tag peptide', a short internal open reading frame. During trans-translation Ala-aminoacylated tmRNA acts like a tRNA, entering the A-site of stalled ribosomes, displacing the stalled mRNA. The ribosome then switches to translate the ORF on the tmRNA; the nascent peptide is terminated with the 'tag peptide' encoded by the tmRNA and targeted for degradation. The ribosome is freed to recommence translation, which seems to be the essential function of trans-translation. The protein is SsrA-binding protein of Chlamydia muridarum (strain MoPn / Nigg).